We begin with the raw amino-acid sequence, 1099 residues long: Carbamoyl phosphate synthase large chain (1099 aa).

A carboxyphosphate synthetic domain region spans residues 1–402 (MPKREDIKRI…ALGKALRSLE (402 aa)). Residues arginine 129, arginine 169, glycine 175, glycine 176, glutamate 208, valine 210, glutamate 215, glycine 241, isoleucine 242, histidine 243, glutamine 285, and glutamate 299 each contribute to the ATP site. Residues 133–328 (KETMEKAGLE…IAKVAALLAV (196 aa)) form the ATP-grasp 1 domain. The Mg(2+) site is built by glutamine 285, glutamate 299, and asparagine 301. Mn(2+)-binding residues include glutamine 285, glutamate 299, and asparagine 301. An oligomerization domain region spans residues 403–541 (LDAAPKLDLE…STYNGVENEA (139 aa)). A carbamoyl phosphate synthetic domain region spans residues 542 to 944 (VPSDREKIMI…AFAKAQIAAG (403 aa)). Residues 666–857 (AKLLKQIGLK…VARIAAKIMV (192 aa)) enclose the ATP-grasp 2 domain. ATP-binding residues include arginine 702, lysine 741, leucine 743, glutamate 748, glycine 773, valine 774, histidine 775, serine 776, glutamine 816, and glutamate 828. Residues glutamine 816, glutamate 828, and asparagine 830 each contribute to the Mg(2+) site. Mn(2+)-binding residues include glutamine 816, glutamate 828, and asparagine 830. In terms of domain architecture, MGS-like spans 945-1099 (NPLPTTGAIL…VRRLTDTWKM (155 aa)). The segment at 945 to 1099 (NPLPTTGAIL…VRRLTDTWKM (155 aa)) is allosteric domain.

The protein belongs to the CarB family. Composed of two chains; the small (or glutamine) chain promotes the hydrolysis of glutamine to ammonia, which is used by the large (or ammonia) chain to synthesize carbamoyl phosphate. Tetramer of heterodimers (alpha,beta)4. Mg(2+) serves as cofactor. Requires Mn(2+) as cofactor.

It catalyses the reaction hydrogencarbonate + L-glutamine + 2 ATP + H2O = carbamoyl phosphate + L-glutamate + 2 ADP + phosphate + 2 H(+). The catalysed reaction is hydrogencarbonate + NH4(+) + 2 ATP = carbamoyl phosphate + 2 ADP + phosphate + 2 H(+). It participates in amino-acid biosynthesis; L-arginine biosynthesis; carbamoyl phosphate from bicarbonate: step 1/1. The protein operates within pyrimidine metabolism; UMP biosynthesis via de novo pathway; (S)-dihydroorotate from bicarbonate: step 1/3. Functionally, large subunit of the glutamine-dependent carbamoyl phosphate synthetase (CPSase). CPSase catalyzes the formation of carbamoyl phosphate from the ammonia moiety of glutamine, carbonate, and phosphate donated by ATP, constituting the first step of 2 biosynthetic pathways, one leading to arginine and/or urea and the other to pyrimidine nucleotides. The large subunit (synthetase) binds the substrates ammonia (free or transferred from glutamine from the small subunit), hydrogencarbonate and ATP and carries out an ATP-coupled ligase reaction, activating hydrogencarbonate by forming carboxy phosphate which reacts with ammonia to form carbamoyl phosphate. The polypeptide is Carbamoyl phosphate synthase large chain (Thermotoga maritima (strain ATCC 43589 / DSM 3109 / JCM 10099 / NBRC 100826 / MSB8)).